Consider the following 123-residue polypeptide: UPF0102 protein PFL_5073 (123 aa).

This sequence belongs to the UPF0102 family.

This chain is UPF0102 protein PFL_5073, found in Pseudomonas fluorescens (strain ATCC BAA-477 / NRRL B-23932 / Pf-5).